Reading from the N-terminus, the 253-residue chain is Zwei Ig domain protein zig-4 (253 aa).

Residues 1-16 form the signal peptide; it reads MFAIALLSFLVVLINA. Ig-like C2-type domains follow at residues 43–146 and 162–245; these read PAKI…AEVE and PEIV…TFLY. 2 disulfides stabilise this stretch: cysteine 67–cysteine 130 and cysteine 183–cysteine 229.

Expressed in PVT, ASK, BAG, M2 and ASI neurons. In L1 larvae, expressed in pharyngeal ectoderm and mesoderm.

It localises to the secreted. Functionally, required for maintaining axon position of PVQ and PVP neurons postembryonically in the ventral nerve cord (VNC) by preventing axons drifting into the opposite side of the VNC that could occur during body growth and movement. This is Zwei Ig domain protein zig-4 from Caenorhabditis elegans.